The primary structure comprises 128 residues: Fluoride-specific ion channel FluC (128 aa).

Transmembrane regions (helical) follow at residues 5 to 25 (IVAI…LALA), 35 to 55 (LGTL…AVVF), 67 to 87 (LFVI…SVEV), and 96 to 116 (FGWA…LTAL). Residues G75 and T78 each contribute to the Na(+) site.

Belongs to the fluoride channel Fluc/FEX (TC 1.A.43) family.

It localises to the cell inner membrane. It carries out the reaction fluoride(in) = fluoride(out). Its activity is regulated as follows. Na(+) is not transported, but it plays an essential structural role and its presence is essential for fluoride channel function. Functionally, fluoride-specific ion channel. Important for reducing fluoride concentration in the cell, thus reducing its toxicity. In Burkholderia ambifaria (strain MC40-6), this protein is Fluoride-specific ion channel FluC.